A 169-amino-acid chain; its full sequence is Regulator of ribonuclease activity A (169 aa).

Belongs to the RraA family. As to quaternary structure, homotrimer. Binds to both RNA-binding sites in the C-terminal region of Rne and to RhlB.

The protein localises to the cytoplasm. Globally modulates RNA abundance by binding to RNase E (Rne) and regulating its endonucleolytic activity. Can modulate Rne action in a substrate-dependent manner by altering the composition of the degradosome. Modulates RNA-binding and helicase activities of the degradosome. The chain is Regulator of ribonuclease activity A from Photorhabdus laumondii subsp. laumondii (strain DSM 15139 / CIP 105565 / TT01) (Photorhabdus luminescens subsp. laumondii).